We begin with the raw amino-acid sequence, 748 residues long: Catalase-peroxidase 2 (748 aa).

The span at 1 to 24 shows a compositional bias: polar residues; it reads MSSDTSDSRPPNPDTKTASTSESE. Residues 1-43 form a disordered region; it reads MSSDTSDSRPPNPDTKTASTSESENPAIPSPKPKSGAPLRNQD. The segment at residues 113–238 is a cross-link (tryptophyl-tyrosyl-methioninium (Trp-Tyr) (with M-264)); that stretch reads WHSAGTYRIH…YGATTMGLIY (126 aa). The active-site Proton acceptor is His-114. The tryptophyl-tyrosyl-methioninium (Tyr-Met) (with W-113) cross-link spans 238-264; sequence YVNPEGPEGQPDPLAAAHDIRETFGRM. Position 279 (His-279) interacts with heme b.

It belongs to the peroxidase family. Peroxidase/catalase subfamily. Homotetramer. The cofactor is heme b. Formation of the three residue Trp-Tyr-Met cross-link is important for the catalase, but not the peroxidase activity of the enzyme.

It carries out the reaction H2O2 + AH2 = A + 2 H2O. The enzyme catalyses 2 H2O2 = O2 + 2 H2O. Its function is as follows. Bifunctional enzyme with both catalase and broad-spectrum peroxidase activity. May play a role in the intracellular survival of mycobacteria. This is Catalase-peroxidase 2 from Mycolicibacterium smegmatis (strain ATCC 700084 / mc(2)155) (Mycobacterium smegmatis).